The sequence spans 145 residues: D-aminoacyl-tRNA deacylase (145 aa).

The Gly-cisPro motif, important for rejection of L-amino acids signature appears at G137–P138.

Belongs to the DTD family. As to quaternary structure, homodimer.

It is found in the cytoplasm. It catalyses the reaction glycyl-tRNA(Ala) + H2O = tRNA(Ala) + glycine + H(+). It carries out the reaction a D-aminoacyl-tRNA + H2O = a tRNA + a D-alpha-amino acid + H(+). Functionally, an aminoacyl-tRNA editing enzyme that deacylates mischarged D-aminoacyl-tRNAs. Also deacylates mischarged glycyl-tRNA(Ala), protecting cells against glycine mischarging by AlaRS. Acts via tRNA-based rather than protein-based catalysis; rejects L-amino acids rather than detecting D-amino acids in the active site. By recycling D-aminoacyl-tRNA to D-amino acids and free tRNA molecules, this enzyme counteracts the toxicity associated with the formation of D-aminoacyl-tRNA entities in vivo and helps enforce protein L-homochirality. This Pseudomonas fluorescens (strain SBW25) protein is D-aminoacyl-tRNA deacylase.